Consider the following 317-residue polypeptide: Type II methyltransferase M.NgoBI (317 aa).

Positions 2 to 302 constitute an SAM-dependent MTase C5-type domain; the sequence is YKTIDLFSGI…KICSLLFPAR (301 aa). Residue Cys-71 is part of the active site.

Belongs to the class I-like SAM-binding methyltransferase superfamily. C5-methyltransferase family.

The enzyme catalyses a 2'-deoxycytidine in DNA + S-adenosyl-L-methionine = a 5-methyl-2'-deoxycytidine in DNA + S-adenosyl-L-homocysteine + H(+). In terms of biological role, a methylase, recognizes the double-stranded sequence 5'-RGCGCY-3', methylates C-5 on both strands, and protects the DNA from cleavage by the NgoBI endonuclease. The protein is Type II methyltransferase M.NgoBI (ngoBIM) of Neisseria gonorrhoeae.